We begin with the raw amino-acid sequence, 320 residues long: Porphobilinogen deaminase (320 aa).

S-(dipyrrolylmethanemethyl)cysteine is present on cysteine 241.

This sequence belongs to the HMBS family. Monomer. The cofactor is dipyrromethane.

The enzyme catalyses 4 porphobilinogen + H2O = hydroxymethylbilane + 4 NH4(+). It participates in porphyrin-containing compound metabolism; protoporphyrin-IX biosynthesis; coproporphyrinogen-III from 5-aminolevulinate: step 2/4. In terms of biological role, tetrapolymerization of the monopyrrole PBG into the hydroxymethylbilane pre-uroporphyrinogen in several discrete steps. The polypeptide is Porphobilinogen deaminase (Thermobifida fusca (strain YX)).